Here is a 485-residue protein sequence, read N- to C-terminus: Glycogen synthase (485 aa).

Lys-15 is an ADP-alpha-D-glucose binding site.

The protein belongs to the glycosyltransferase 1 family. Bacterial/plant glycogen synthase subfamily.

It carries out the reaction [(1-&gt;4)-alpha-D-glucosyl](n) + ADP-alpha-D-glucose = [(1-&gt;4)-alpha-D-glucosyl](n+1) + ADP + H(+). The protein operates within glycan biosynthesis; glycogen biosynthesis. Its function is as follows. Synthesizes alpha-1,4-glucan chains using ADP-glucose. This chain is Glycogen synthase, found in Francisella philomiragia subsp. philomiragia (strain ATCC 25017 / CCUG 19701 / FSC 153 / O#319-036).